The primary structure comprises 131 residues: Small ribosomal subunit protein uS8 (131 aa).

Belongs to the universal ribosomal protein uS8 family. In terms of assembly, part of the 30S ribosomal subunit. Contacts proteins S5 and S12.

One of the primary rRNA binding proteins, it binds directly to 16S rRNA central domain where it helps coordinate assembly of the platform of the 30S subunit. This Leptothrix cholodnii (strain ATCC 51168 / LMG 8142 / SP-6) (Leptothrix discophora (strain SP-6)) protein is Small ribosomal subunit protein uS8.